The following is a 148-amino-acid chain: MFRRPVLQVLRQFVRHESETASSLVLERSLNRVHLLGRVGQDPVLRQVEGKNPVTIFSLATNEMWRSGDSEVYQLGDISQKTTWHRISVFRPGLRDVAYQYVKKGSRIYLEGKIDYGEYMDKNNVRRQATTIIADNIIFLSDQTKEKE.

A mitochondrion-targeting transit peptide spans 1 to 16; that stretch reads MFRRPVLQVLRQFVRH. Residues 30-141 enclose the SSB domain; the sequence is LNRVHLLGRV…IIADNIIFLS (112 aa). 2 positions are modified to phosphoserine: S67 and S79. K113 carries the post-translational modification N6-acetyllysine. Position 122 is an N6-succinyllysine (K122).

Homotetramer. Interacts with MPG/AAG, through inhibition of its glycosylase activity it potentially prevents formation of DNA breaks in ssDNA, ensuring that base removal primarily occurs in dsDNA. Interacts with POLDIP2. Interacts with PRIMPOL.

It is found in the mitochondrion. The protein resides in the mitochondrion matrix. It localises to the mitochondrion nucleoid. In terms of biological role, binds preferentially and cooperatively to pyrimidine rich single-stranded DNA (ss-DNA). In vitro, required to maintain the copy number of mitochondrial DNA (mtDNA) and plays a crucial role during mtDNA replication by stimulating the activity of the replisome components POLG and TWNK at the replication fork. Promotes the activity of the gamma complex polymerase POLG, largely by organizing the template DNA and eliminating secondary structures to favor ss-DNA conformations that facilitate POLG activity. In addition it is able to promote the 5'-3' unwinding activity of the mtDNA helicase TWNK. May also function in mtDNA repair. The chain is Single-stranded DNA-binding protein, mitochondrial (SSBP1) from Pongo abelii (Sumatran orangutan).